We begin with the raw amino-acid sequence, 136 residues long: MDVAVKKVEVRQLKKGKYIMIDDEPCKIVEYTTSSPGKHGSAKARIVAVGLFDGKKRTLTKPVDAKVDVPVIERKTAQVVSDMGDTVQLMDMETYETFEVQKPEDEELASQLEPGTMVEYMEAAGKRKIVGIKEEE.

At lysine 38 the chain carries Hypusine.

This sequence belongs to the eIF-5A family.

Its subcellular location is the cytoplasm. Functionally, functions by promoting the formation of the first peptide bond. In Methanopyrus kandleri (strain AV19 / DSM 6324 / JCM 9639 / NBRC 100938), this protein is Translation initiation factor 5A.